Reading from the N-terminus, the 629-residue chain is Probable alpha-L-arabinofuranosidase A (629 aa).

A signal peptide spans 1-25 (MVALSTLSGLSALPFLFSLVQNVYG). 9 N-linked (GlcNAc...) asparagine glycosylation sites follow: N36, N51, N140, N152, N168, N171, N260, N494, and N534.

It belongs to the glycosyl hydrolase 51 family.

It localises to the secreted. It catalyses the reaction Hydrolysis of terminal non-reducing alpha-L-arabinofuranoside residues in alpha-L-arabinosides.. The protein operates within glycan metabolism; L-arabinan degradation. In terms of biological role, alpha-L-arabinofuranosidase involved in the degradation of arabinoxylan, a major component of plant hemicellulose. Acts only on small linear 1,5-alpha-linked L-arabinofuranosyl oligosaccharides. The sequence is that of Probable alpha-L-arabinofuranosidase A (abfA) from Aspergillus oryzae (strain ATCC 42149 / RIB 40) (Yellow koji mold).